A 169-amino-acid polypeptide reads, in one-letter code: Protein AIG2 B (169 aa).

15-20 (YGSFQE) lines the substrate pocket. Glutamate 83 functions as the Proton acceptor in the catalytic mechanism.

The protein belongs to the gamma-glutamylcyclotransferase family. As to expression, expressed in roots, leaves and stems.

Putative gamma-glutamylcyclotransferase. This is Protein AIG2 B from Arabidopsis thaliana (Mouse-ear cress).